The following is an 80-amino-acid chain: Exodeoxyribonuclease 7 small subunit (80 aa).

The protein belongs to the XseB family. Heterooligomer composed of large and small subunits.

The protein localises to the cytoplasm. The enzyme catalyses Exonucleolytic cleavage in either 5'- to 3'- or 3'- to 5'-direction to yield nucleoside 5'-phosphates.. Its function is as follows. Bidirectionally degrades single-stranded DNA into large acid-insoluble oligonucleotides, which are then degraded further into small acid-soluble oligonucleotides. In Maridesulfovibrio salexigens (strain ATCC 14822 / DSM 2638 / NCIMB 8403 / VKM B-1763) (Desulfovibrio salexigens), this protein is Exodeoxyribonuclease 7 small subunit.